A 64-amino-acid chain; its full sequence is MGMRMMFTMFLLVVLTTTVVSFNSDRESNHENRRTSNQITRGMWDECCDDPPCRQNNMEHCPAS.

A signal peptide spans 1–21; it reads MGMRMMFTMFLLVVLTTTVVS. Positions 22-41 are excised as a propeptide; the sequence is FNSDRESNHENRRTSNQITR. 2 disulfide bridges follow: Cys-47–Cys-53 and Cys-48–Cys-61. The interval 49–51 is lacks the Ser-Xaa-Pro motif that is crucial for potent interaction with nAChR; it reads DDP.

It belongs to the conotoxin A superfamily. As to expression, expressed by the venom duct.

The protein resides in the secreted. In terms of biological role, alpha-conotoxins act on postsynaptic membranes, they bind to the nicotinic acetylcholine receptors (nAChR) and thus inhibit them. Has possibly a distinct nAChR binding mode from other alpha-conotoxins, due to a different three residue motif (lacks the Ser-Xaa-Pro motif). The chain is Alpha-conotoxin-like Lp1.7 from Conus leopardus (Leopard cone).